A 407-amino-acid chain; its full sequence is Tryptophan synthase beta chain (407 aa).

Lys-91 is subject to N6-(pyridoxal phosphate)lysine.

The protein belongs to the TrpB family. Tetramer of two alpha and two beta chains. Pyridoxal 5'-phosphate is required as a cofactor.

It catalyses the reaction (1S,2R)-1-C-(indol-3-yl)glycerol 3-phosphate + L-serine = D-glyceraldehyde 3-phosphate + L-tryptophan + H2O. The protein operates within amino-acid biosynthesis; L-tryptophan biosynthesis; L-tryptophan from chorismate: step 5/5. In terms of biological role, the beta subunit is responsible for the synthesis of L-tryptophan from indole and L-serine. The polypeptide is Tryptophan synthase beta chain (Streptococcus pneumoniae (strain Taiwan19F-14)).